A 513-amino-acid polypeptide reads, in one-letter code: Bifunctional purine biosynthesis protein PurH (513 aa).

The MGS-like domain maps to 1 to 144 (MKRALVSVSD…KNYRDVTIVV (144 aa)).

The protein belongs to the PurH family.

The catalysed reaction is (6R)-10-formyltetrahydrofolate + 5-amino-1-(5-phospho-beta-D-ribosyl)imidazole-4-carboxamide = 5-formamido-1-(5-phospho-D-ribosyl)imidazole-4-carboxamide + (6S)-5,6,7,8-tetrahydrofolate. It catalyses the reaction IMP + H2O = 5-formamido-1-(5-phospho-D-ribosyl)imidazole-4-carboxamide. Its pathway is purine metabolism; IMP biosynthesis via de novo pathway; 5-formamido-1-(5-phospho-D-ribosyl)imidazole-4-carboxamide from 5-amino-1-(5-phospho-D-ribosyl)imidazole-4-carboxamide (10-formyl THF route): step 1/1. The protein operates within purine metabolism; IMP biosynthesis via de novo pathway; IMP from 5-formamido-1-(5-phospho-D-ribosyl)imidazole-4-carboxamide: step 1/1. This Lactobacillus delbrueckii subsp. bulgaricus (strain ATCC BAA-365 / Lb-18) protein is Bifunctional purine biosynthesis protein PurH.